Reading from the N-terminus, the 210-residue chain is Probable GTP-binding protein EngB (210 aa).

The EngB-type G domain occupies 22-198 (FLPEYAFIGR…LTYIDEVNQE (177 aa)). Residues 30–37 (GRSNVGKS), 57–61 (GKTQL), 75–78 (DLPG), 142–145 (TKAD), and 177–179 (TSS) contribute to the GTP site. S37 and T59 together coordinate Mg(2+).

Belongs to the TRAFAC class TrmE-Era-EngA-EngB-Septin-like GTPase superfamily. EngB GTPase family. The cofactor is Mg(2+).

In terms of biological role, necessary for normal cell division and for the maintenance of normal septation. This is Probable GTP-binding protein EngB from Flavobacterium johnsoniae (strain ATCC 17061 / DSM 2064 / JCM 8514 / BCRC 14874 / CCUG 350202 / NBRC 14942 / NCIMB 11054 / UW101) (Cytophaga johnsonae).